A 131-amino-acid chain; its full sequence is Maturin (131 aa).

At tyrosine 34 the chain carries Phosphotyrosine. The segment covering 107–120 (FEEYSADVEEEEPE) has biased composition (acidic residues). The disordered stretch occupies residues 107 to 131 (FEEYSADVEEEEPEADHPQMGVSQQ).

Belongs to the MTURN family. In terms of processing, phosphorylation at Tyr-34 is essential for its ability to promote megakaryocyte differentiation.

The protein localises to the cytoplasm. In terms of biological role, promotes megakaryocyte differentiation by enhancing ERK and JNK signaling as well as up-regulating RUNX1 and FLI1 expression. Represses NF-kappa-B transcriptional activity by inhibiting phosphorylation of RELA at 'Ser- 536'. May be involved in early neuronal development. The protein is Maturin (Mturn) of Rattus norvegicus (Rat).